The following is a 422-amino-acid chain: Glutamyl-tRNA reductase (422 aa).

Substrate contacts are provided by residues 49–52, Ser-107, 112–114, and Gln-118; these read TCNR and EPQ. Catalysis depends on Cys-50, which acts as the Nucleophile. An NADP(+)-binding site is contributed by 187–192; the sequence is GAGETI.

This sequence belongs to the glutamyl-tRNA reductase family. Homodimer.

It carries out the reaction (S)-4-amino-5-oxopentanoate + tRNA(Glu) + NADP(+) = L-glutamyl-tRNA(Glu) + NADPH + H(+). It participates in porphyrin-containing compound metabolism; protoporphyrin-IX biosynthesis; 5-aminolevulinate from L-glutamyl-tRNA(Glu): step 1/2. Catalyzes the NADPH-dependent reduction of glutamyl-tRNA(Glu) to glutamate 1-semialdehyde (GSA). In Pseudomonas aeruginosa (strain ATCC 15692 / DSM 22644 / CIP 104116 / JCM 14847 / LMG 12228 / 1C / PRS 101 / PAO1), this protein is Glutamyl-tRNA reductase.